A 637-amino-acid polypeptide reads, in one-letter code: Protein RRP6-like 1 (637 aa).

In terms of domain architecture, 3'-5' exonuclease spans 118–283; sequence VEEVKDLEDL…YIYDVMRMEL (166 aa). The HRDC domain occupies 334–414; it reads NAVQLSIVAG…RRSMQNAAAF (81 aa). Residues 553–565 are compositionally biased toward acidic residues; the sequence is VDDDDDDDDDESY. Residues 553-624 are disordered; it reads VDDDDDDDDD…EDMRRRSEKH (72 aa). Residues 580–598 are compositionally biased toward polar residues; it reads ETPSKGSPSLTQKPKTCNT. Over residues 602 to 614 the composition is skewed to acidic residues; it reads VLDDDDDSESRED.

It localises to the nucleus. The protein localises to the nucleoplasm. Acts as an important epigenetic regulator through multiple silencing mechanisms. Involved in transcriptional gene silencing (TGS). Plays a role for DNA methylation in the RNA-directed DNA methylation (RdDM) pathway. Contributes to the methylation status of the retrotransposon SN1. Required for DNA methylation only at a subset of RdDM target loci. Plays a regulatory role in RdDM through retention of non-coding RNAs (ncRNAs) in normal cells. Helps to retain Pol V-transcribed RNAs in chromatin to enable their scaffold function and is required for genome-wide Pol IV-dependent siRNA (24 nt siRNA) production that may involve retention of Pol IV transcripts. Involved in association with RRP6L2 in the silencing of the solo LTR locus. Controls levels of ncRNAs from the solo LTR locus. Seems to function independently of the RdDM pathway. Functions redundantly with RRP6L2 in the regulation of FLC locus. Participates in the maintenance of trimethylated 'Lys-27' (H3K27me3) at FLC locus via the regulation of antisense long non-coding RNAs (lncRNAs) and the regulation of diverse antisense RNAs derived from the FLC locus. Seems not involved in the exosomal RNA degradation. Can complement the growth defect of a yeast mutant lacking RRP6 exonuclease. The protein is Protein RRP6-like 1 of Arabidopsis thaliana (Mouse-ear cress).